Consider the following 228-residue polypeptide: Caspase recruitment domain-containing protein 19 (228 aa).

A disulfide bridge connects residues cysteine 7 and cysteine 77. In terms of domain architecture, CARD spans 8–99 (DRLVQDTPFL…PLHSRLPSRH (92 aa)). Valine 113 carries the phosphoserine modification.

Associates with BCL10 by CARD-CARD interaction. Expressed in ovary, testis, placenta, skeletal muscle, kidney, lung, heart and liver (at protein level). Expressed in thymus and brain.

The protein localises to the nucleus. The protein resides in the endoplasmic reticulum membrane. Its subcellular location is the mitochondrion membrane. In terms of biological role, plays a role in inhibiting the effects of BCL10-induced activation of NF-kappa-B. May inhibit the phosphorylation of BCL10 in a CARD-dependent manner. The sequence is that of Caspase recruitment domain-containing protein 19 (CARD19) from Homo sapiens (Human).